We begin with the raw amino-acid sequence, 229 residues long: C-type lectin domain family 1 member B (229 aa).

The Cytoplasmic portion of the chain corresponds to 1-33 (MQDEDGYITLNIKTRKPALISVGSASSSWWRVM). Phosphotyrosine is present on Tyr7. The ITAM motif lies at 7-10 (YITL). A helical; Signal-anchor for type II membrane protein transmembrane segment spans residues 34 to 54 (ALILLILCVGMVVGLVALGIW). The Extracellular portion of the chain corresponds to 55–229 (SVMQRNYLQG…AGMTKVDQLP (175 aa)). A glycan (N-linked (GlcNAc...) asparagine) is linked at Asn68. The cysteines at positions 102 and 113 are disulfide-linked. The C-type lectin domain occupies 109–217 (YGDSCYGFFR…CENKHYLMCE (109 aa)). N-linked (GlcNAc...) asparagine glycans are attached at residues Asn120 and Asn134. Intrachain disulfides connect Cys130–Cys216 and Cys195–Cys208.

Homodimer. Interacts (via cytoplasmic domain) with RACK1; promotes CLEC1B ubiquitination and proteasome-mediated degradation. Interacts (dimer) with SYK (via SH2 domains). Interacts with PDPN; the interaction is independent of CLEC1B glycosylation and activates CLEC1B. In terms of processing, glycosylated. Post-translationally, phosphorylated on tyrosine residue in response to rhodocytin binding. As to expression, expressed preferentially in the liver. Also expressed in immune cells of myeloid origin and on the surface of platelets.

The protein localises to the membrane. In terms of biological role, C-type lectin-like receptor that functions as a platelet receptor for the lymphatic endothelial marker, PDPN. After ligand activation, signals via sequential activation of SRC and SYK tyrosine kinases leading to activation of PLCG2. (Microbial infection) Acts as a receptor for the platelet-aggregating snake venom protein rhodocytin. Rhodocytin binding leads to tyrosine phosphorylation and this promotes the binding of spleen tyrosine kinase (SYK) and initiation of downstream tyrosine phosphorylation events and activation of PLCG2. Functionally, (Microbial infection) Acts as an attachment factor for Human immunodeficiency virus type 1 (HIV-1) and facilitates its capture by platelets. The protein is C-type lectin domain family 1 member B (CLEC1B) of Homo sapiens (Human).